The primary structure comprises 95 residues: Aspartyl/glutamyl-tRNA(Asn/Gln) amidotransferase subunit C (95 aa).

It belongs to the GatC family. Heterotrimer of A, B and C subunits.

The catalysed reaction is L-glutamyl-tRNA(Gln) + L-glutamine + ATP + H2O = L-glutaminyl-tRNA(Gln) + L-glutamate + ADP + phosphate + H(+). It carries out the reaction L-aspartyl-tRNA(Asn) + L-glutamine + ATP + H2O = L-asparaginyl-tRNA(Asn) + L-glutamate + ADP + phosphate + 2 H(+). Its function is as follows. Allows the formation of correctly charged Asn-tRNA(Asn) or Gln-tRNA(Gln) through the transamidation of misacylated Asp-tRNA(Asn) or Glu-tRNA(Gln) in organisms which lack either or both of asparaginyl-tRNA or glutaminyl-tRNA synthetases. The reaction takes place in the presence of glutamine and ATP through an activated phospho-Asp-tRNA(Asn) or phospho-Glu-tRNA(Gln). In Chlorobium chlorochromatii (strain CaD3), this protein is Aspartyl/glutamyl-tRNA(Asn/Gln) amidotransferase subunit C.